We begin with the raw amino-acid sequence, 585 residues long: Switch-associated protein 70 (585 aa).

Residues 210–306 enclose the PH domain; the sequence is DVLKQGYMIK…WIQAIHSTIH (97 aa). Residues 316-532 adopt a coiled-coil conformation; the sequence is HKEARQRRKE…KLEMAAKMTK (217 aa).

In terms of assembly, the SWAP complex consists of NPM1, NCL, PARP1 and SWAP70. In terms of processing, tyrosine-phosphorylated.

It is found in the cytoplasm. Its subcellular location is the cell membrane. The protein localises to the nucleus. The protein resides in the cell projection. It localises to the lamellipodium. Phosphatidylinositol 3,4,5-trisphosphate-dependent guanine nucleotide exchange factor (GEF) which, independently of RAS, transduces signals from tyrosine kinase receptors to RAC. It also mediates signaling of membrane ruffling. Regulates the actin cytoskeleton as an effector or adapter protein in response to agonist stimulated phosphatidylinositol (3,4)-bisphosphate production and cell protrusion. The sequence is that of Switch-associated protein 70 (SWAP70) from Bos taurus (Bovine).